Here is a 429-residue protein sequence, read N- to C-terminus: MTLKITPARGLRGEAWVPGDKSISHRVVMLGSLARGETAATNFLPGEDCLATVRCFRALGVEIEGPDGDTIRIRGRGPEALTEAPDVLDAGNSGTTMRLMLGILAGQPFFSVITGDASLRRRPMGRVTGPLQEMGATILGRRNANLAPIAVAGGRLSGIRYRLPVASAQLKSALLLAGLFADSPTEVTEPVATRDHTERMLAAFGALVARRGSSVTVAPSPELCGREIRIPGDISSAAFFIVAALITPESDLVLKDVGVNPTRTGILDALANMGARISVSRPRESGGEPVADIRVRSSALRGTVIEGALIPRLVDEIPVLAVAAAYADGETVIRDAAELRVKESDRLAATRKELSTLGADIRETPDGLVIRGPRRLTGGSCNSHGDHRIAMAAAVAGLAASDVTIIRDSNCIDVSFPGFAHALNSLRLE.

The 3-phosphoshikimate site is built by lysine 21, serine 22, and arginine 26. Position 21 (lysine 21) interacts with phosphoenolpyruvate. Phosphoenolpyruvate is bound by residues glycine 94 and arginine 122. Serine 167, glutamine 169, aspartate 315, and lysine 342 together coordinate 3-phosphoshikimate. A phosphoenolpyruvate-binding site is contributed by glutamine 169. Aspartate 315 (proton acceptor) is an active-site residue. Phosphoenolpyruvate-binding residues include arginine 346 and arginine 388.

Belongs to the EPSP synthase family. In terms of assembly, monomer.

The protein localises to the cytoplasm. The catalysed reaction is 3-phosphoshikimate + phosphoenolpyruvate = 5-O-(1-carboxyvinyl)-3-phosphoshikimate + phosphate. It participates in metabolic intermediate biosynthesis; chorismate biosynthesis; chorismate from D-erythrose 4-phosphate and phosphoenolpyruvate: step 6/7. Its function is as follows. Catalyzes the transfer of the enolpyruvyl moiety of phosphoenolpyruvate (PEP) to the 5-hydroxyl of shikimate-3-phosphate (S3P) to produce enolpyruvyl shikimate-3-phosphate and inorganic phosphate. In Desulforudis audaxviator (strain MP104C), this protein is 3-phosphoshikimate 1-carboxyvinyltransferase.